Reading from the N-terminus, the 67-residue chain is MAFDKKLLEIVACPVCKGTLILNKDSNGNERLVCRFDRLAYPIEQNIPVLLETEALVLSSEELEKIK.

Belongs to the UPF0434 family.

The chain is UPF0434 protein Patl_1782 from Pseudoalteromonas atlantica (strain T6c / ATCC BAA-1087).